Consider the following 545-residue polypeptide: Chaperonin GroEL 1 (545 aa).

ATP contacts are provided by residues threonine 30–proline 33, lysine 51, aspartate 87–threonine 91, glycine 415, and aspartate 496.

This sequence belongs to the chaperonin (HSP60) family. In terms of assembly, forms a cylinder of 14 subunits composed of two heptameric rings stacked back-to-back. Interacts with the co-chaperonin GroES.

It is found in the cytoplasm. The enzyme catalyses ATP + H2O + a folded polypeptide = ADP + phosphate + an unfolded polypeptide.. In terms of biological role, together with its co-chaperonin GroES, plays an essential role in assisting protein folding. The GroEL-GroES system forms a nano-cage that allows encapsulation of the non-native substrate proteins and provides a physical environment optimized to promote and accelerate protein folding. In Nitrobacter hamburgensis (strain DSM 10229 / NCIMB 13809 / X14), this protein is Chaperonin GroEL 1.